A 108-amino-acid chain; its full sequence is Nucleoid-associated protein BARBAKC583_1239 (108 aa).

This sequence belongs to the YbaB/EbfC family. Homodimer.

The protein localises to the cytoplasm. It is found in the nucleoid. Functionally, binds to DNA and alters its conformation. May be involved in regulation of gene expression, nucleoid organization and DNA protection. This is Nucleoid-associated protein BARBAKC583_1239 from Bartonella bacilliformis (strain ATCC 35685 / KC583 / Herrer 020/F12,63).